The primary structure comprises 306 residues: Ornithine carbamoyltransferase (306 aa).

Carbamoyl phosphate is bound by residues 51–54, glutamine 78, arginine 102, and 129–132; these read STRT and HPCQ. L-ornithine contacts are provided by residues asparagine 160, aspartate 223, and 227–228; that span reads SM. Carbamoyl phosphate contacts are provided by residues 263 to 264 and arginine 291; that span reads CL.

The protein belongs to the aspartate/ornithine carbamoyltransferase superfamily. OTCase family.

It is found in the cytoplasm. The catalysed reaction is carbamoyl phosphate + L-ornithine = L-citrulline + phosphate + H(+). The protein operates within amino-acid biosynthesis; L-arginine biosynthesis; L-arginine from L-ornithine and carbamoyl phosphate: step 1/3. Reversibly catalyzes the transfer of the carbamoyl group from carbamoyl phosphate (CP) to the N(epsilon) atom of ornithine (ORN) to produce L-citrulline. The polypeptide is Ornithine carbamoyltransferase (Nostoc sp. (strain PCC 7120 / SAG 25.82 / UTEX 2576)).